The sequence spans 315 residues: Melanoma-associated antigen 9 (315 aa).

Positions 1–13 (MSLEQRSPHCKPD) are enriched in basic and acidic residues. The interval 1 to 67 (MSLEQRSPHC…PQSPQGGASS (67 aa)) is disordered. The segment covering 50-67 (SAAGSSSPPQSPQGGASS) has biased composition (low complexity). Residues 108 to 307 (LKLKVAELVH…ICYPSLYEEV (200 aa)) form the MAGE domain.

Expressed in many tumors of several types, such as melanoma, head and neck squamous cell carcinoma, lung carcinoma and breast carcinoma, but not in normal tissues except for testes and placenta.

Functionally, not known, though may play a role in embryonal development and tumor transformation or aspects of tumor progression. This Homo sapiens (Human) protein is Melanoma-associated antigen 9 (MAGEA9).